The primary structure comprises 305 residues: tRNA pseudouridine synthase B (305 aa).

The active-site Nucleophile is the Asp48.

This sequence belongs to the pseudouridine synthase TruB family. Type 1 subfamily.

It catalyses the reaction uridine(55) in tRNA = pseudouridine(55) in tRNA. Responsible for synthesis of pseudouridine from uracil-55 in the psi GC loop of transfer RNAs. This Pseudomonas syringae pv. syringae (strain B728a) protein is tRNA pseudouridine synthase B.